The chain runs to 177 residues: Large ribosomal subunit protein uL6 (177 aa).

The segment at 155–177 is disordered; sequence EPYKGKGVKHADERIFRKEGKKK.

Belongs to the universal ribosomal protein uL6 family. As to quaternary structure, part of the 50S ribosomal subunit.

This protein binds to the 23S rRNA, and is important in its secondary structure. It is located near the subunit interface in the base of the L7/L12 stalk, and near the tRNA binding site of the peptidyltransferase center. The sequence is that of Large ribosomal subunit protein uL6 from Bartonella tribocorum (strain CIP 105476 / IBS 506).